Consider the following 524-residue polypeptide: Serine/threonine-protein kinase PAK 2 (524 aa).

The interval 1 to 81 (MSDNGELEDK…PEISPPSDFE (81 aa)) is disordered. Ser-2 bears the N-acetylserine mark. Residues Ser-2, Ser-20, Ser-55, and Ser-58 each carry the phosphoserine modification. Position 60 is a phosphothreonine (Thr-60). At Lys-62 the chain carries N6-acetyllysine. At Ser-64 the chain carries Phosphoserine. The span at 67-81 (KEKERPEISPPSDFE) shows a compositional bias: basic and acidic residues. The interval 69–112 (KERPEISPPSDFEHTIHVGFDAVTGEFTGMPEQWARLLQTSNIT) is GTPase-binding. The segment at 69–137 (KERPEISPPS…KFYDSNTVKQ (69 aa)) is autoregulatory region. Positions 74–87 (ISPPSDFEHTIHVG) constitute a CRIB domain. Positions 88–248 (FDAVTGEFTG…IVSIGDPKKK (161 aa)) are linker. Lys-128 is subject to N6-acetyllysine. At Thr-134 the chain carries Phosphothreonine. A Phosphotyrosine modification is found at Tyr-139. The residue at position 141 (Ser-141) is a Phosphoserine. The residue at position 143 (Thr-143) is a Phosphothreonine. Position 152 is a phosphoserine (Ser-152). Residues Thr-159 and Thr-169 each carry the phosphothreonine modification. Residues 169 to 178 (TEEDDDDEEA) show a composition bias toward acidic residues. The tract at residues 169-188 (TEEDDDDEEAAPPVIAPRPD) is disordered. Ser-197 is subject to Phosphoserine. The segment at 204–228 (APVGDSHVDSGAKSSDKQKKKTKMT) is disordered. The segment covering 209-228 (SHVDSGAKSSDKQKKKTKMT) has biased composition (basic and acidic residues). Positions 245–251 (PKKKYTR) match the Nuclear localization signal motif. Residues 249–500 (YTRYEKIGQG…AKELLQHPFL (252 aa)) enclose the Protein kinase domain. ATP is bound by residues 255 to 263 (IGQGASGTV) and Lys-278. The Proton acceptor role is filled by Asp-368. The residue at position 402 (Thr-402) is a Phosphothreonine; by autocatalysis.

As to quaternary structure, interacts tightly with GTP-bound but not GDP-bound CDC42/p21 and RAC1. Interacts with SH3MD4. Interacts with SCRIB. Interacts with ARHGEF7 and GIT1. PAK-2p34 interacts with ARHGAP10. Interacts with RAC1. In terms of processing, full-length PAK2 is autophosphorylated when activated by CDC42/p21. Following cleavage, both peptides, PAK-2p27 and PAK-2p34, become highly autophosphorylated. Autophosphorylation of PAK-2p27 can occur in the absence of any effectors and is dependent on phosphorylation of Thr-402, because PAK-2p27 is acting as an exogenous substrate. During apoptosis proteolytically cleaved by caspase-3 or caspase-3-like proteases to yield active PAK-2p34. Post-translationally, ubiquitinated, leading to its proteasomal degradation.

Its subcellular location is the cytoplasm. It is found in the nucleus. The protein localises to the perinuclear region. The protein resides in the membrane. The catalysed reaction is L-seryl-[protein] + ATP = O-phospho-L-seryl-[protein] + ADP + H(+). It carries out the reaction L-threonyl-[protein] + ATP = O-phospho-L-threonyl-[protein] + ADP + H(+). Its activity is regulated as follows. Activated by binding small G proteins. Binding of GTP-bound CDC42 or RAC1 to the autoregulatory region releases monomers from the autoinhibited dimer, enables phosphorylation of Thr-402 and allows the kinase domain to adopt an active structure. Following caspase cleavage, autophosphorylated PAK-2p34 is constitutively active. Its function is as follows. Serine/threonine protein kinase that plays a role in a variety of different signaling pathways including cytoskeleton regulation, cell motility, cell cycle progression, apoptosis or proliferation. Acts as a downstream effector of the small GTPases CDC42 and RAC1. Activation by the binding of active CDC42 and RAC1 results in a conformational change and a subsequent autophosphorylation on several serine and/or threonine residues. Full-length PAK2 stimulates cell survival and cell growth. Phosphorylates MAPK4 and MAPK6 and activates the downstream target MAPKAPK5, a regulator of F-actin polymerization and cell migration. Phosphorylates JUN and plays an important role in EGF-induced cell proliferation. Phosphorylates many other substrates including histone H4 to promote assembly of H3.3 and H4 into nucleosomes, BAD, ribosomal protein S6, or MBP. Phosphorylates CASP7, thereby preventing its activity. Additionally, associates with ARHGEF7 and GIT1 to perform kinase-independent functions such as spindle orientation control during mitosis. On the other hand, apoptotic stimuli such as DNA damage lead to caspase-mediated cleavage of PAK2, generating PAK-2p34, an active p34 fragment that translocates to the nucleus and promotes cellular apoptosis involving the JNK signaling pathway. Caspase-activated PAK2 phosphorylates MKNK1 and reduces cellular translation. This Oryctolagus cuniculus (Rabbit) protein is Serine/threonine-protein kinase PAK 2 (PAK2).